Reading from the N-terminus, the 148-residue chain is Lysozyme C (148 aa).

Positions 1–18 (MKAVIILGLVLLSVTVQG) are cleaved as a signal peptide. The C-type lysozyme domain maps to 19 to 148 (KIFERCELAR…VSQYVQGCGV (130 aa)). 4 disulfides stabilise this stretch: C24–C146, C48–C134, C83–C99, and C95–C113. Catalysis depends on residues E53 and D71.

This sequence belongs to the glycosyl hydrolase 22 family. As to quaternary structure, monomer.

The protein resides in the secreted. It carries out the reaction Hydrolysis of (1-&gt;4)-beta-linkages between N-acetylmuramic acid and N-acetyl-D-glucosamine residues in a peptidoglycan and between N-acetyl-D-glucosamine residues in chitodextrins.. Lysozymes have primarily a bacteriolytic function; those in tissues and body fluids are associated with the monocyte-macrophage system and enhance the activity of immunoagents. In Macaca mulatta (Rhesus macaque), this protein is Lysozyme C (LYZ).